Here is a 106-residue protein sequence, read N- to C-terminus: MNDSEFHRLADALWLTIEERLDSWDGDSDIDCEINGGVLTLSFENGSKIIINRQEPLHQVWLATKQGGYHFDLKGDEWVCDRSGETFWDLLEQAATQQAGEKVSFR.

This sequence belongs to the frataxin family.

Functionally, involved in iron-sulfur (Fe-S) cluster assembly. May act as a regulator of Fe-S biogenesis. The protein is Iron-sulfur cluster assembly protein CyaY of Salmonella typhimurium (strain LT2 / SGSC1412 / ATCC 700720).